Consider the following 396-residue polypeptide: Elongation factor Tu (396 aa).

The 196-residue stretch at 10–205 folds into the tr-type G domain; it reads KSHANIGTIG…AVDEYIPTPE (196 aa). Positions 19-26 are G1; that stretch reads GHVDHGKT. Position 19–26 (19–26) interacts with GTP; sequence GHVDHGKT. Thr26 contributes to the Mg(2+) binding site. The interval 61-65 is G2; it reads GITIS. The segment at 82-85 is G3; sequence DCPG. Residues 82 to 86 and 137 to 140 contribute to the GTP site; these read DCPGH and NKCD. A G4 region spans residues 137 to 140; it reads NKCD. Positions 175-177 are G5; the sequence is SAL.

Belongs to the TRAFAC class translation factor GTPase superfamily. Classic translation factor GTPase family. EF-Tu/EF-1A subfamily. As to quaternary structure, monomer.

Its subcellular location is the cytoplasm. The enzyme catalyses GTP + H2O = GDP + phosphate + H(+). Functionally, GTP hydrolase that promotes the GTP-dependent binding of aminoacyl-tRNA to the A-site of ribosomes during protein biosynthesis. The sequence is that of Elongation factor Tu from Bacillus licheniformis (strain ATCC 14580 / DSM 13 / JCM 2505 / CCUG 7422 / NBRC 12200 / NCIMB 9375 / NCTC 10341 / NRRL NRS-1264 / Gibson 46).